We begin with the raw amino-acid sequence, 133 residues long: Small ribosomal subunit protein uS8 (133 aa).

Belongs to the universal ribosomal protein uS8 family. As to quaternary structure, part of the 30S ribosomal subunit. Contacts proteins S5 and S12.

One of the primary rRNA binding proteins, it binds directly to 16S rRNA central domain where it helps coordinate assembly of the platform of the 30S subunit. The chain is Small ribosomal subunit protein uS8 from Gloeobacter violaceus (strain ATCC 29082 / PCC 7421).